A 147-amino-acid chain; its full sequence is MVHLTPEEKAAVAALWGKVNVDEVGGEALGRLLVVYPWTQRFFESFGDLSTPAAVMGNPKVKAHGKKVLGAFSDGLAHLDNLKGTFAQLSELHCDKLHVDPENFRLLGNVLVCVLARNFGKEFTPQVQAAFQKVVAGVATALAHKYH.

In terms of domain architecture, Globin spans 3 to 147; the sequence is HLTPEEKAAV…VATALAHKYH (145 aa). Residues His64 and His93 each contribute to the heme b site.

This sequence belongs to the globin family. As to quaternary structure, heterotetramer of two delta chains and two alpha chains. As to expression, red blood cells.

This Ateles geoffroyi (Black-handed spider monkey) protein is Hemoglobin subunit delta (HBD).